Consider the following 146-residue polypeptide: Superoxide dismutase [Mn] 2 (146 aa).

Residues histidine 42, aspartate 126, and histidine 130 each contribute to the Mn(2+) site.

This sequence belongs to the iron/manganese superoxide dismutase family. It depends on Mn(2+) as a cofactor.

The enzyme catalyses 2 superoxide + 2 H(+) = H2O2 + O2. Destroys superoxide anion radicals which are normally produced within the cells and which are toxic to biological systems. This Haloferax mediterranei (Halobacterium mediterranei) protein is Superoxide dismutase [Mn] 2 (sod2).